The chain runs to 179 residues: FAD-dependent monooxygenase nscC (179 aa).

The first 21 residues, 1–21 (MGKQQETILIIGAGISGLATS), serve as a signal peptide directing secretion. 2 residues coordinate FAD: E35 and A46. An N-linked (GlcNAc...) asparagine glycan is attached at N92. Residue R119 coordinates FAD. The N-linked (GlcNAc...) asparagine glycan is linked to N170.

This sequence belongs to the paxM FAD-dependent monooxygenase family. FAD serves as cofactor.

Its pathway is secondary metabolite biosynthesis. In terms of biological role, FAD-dependent monooxygenase; part of the gene cluster that mediates the biosynthesis of neosartoricin B, a prenylated anthracenone that probably exhibits T-cell antiproliferative activity, suggestive of a physiological role as an immunosuppressive agent. The non-reducing polyketide synthase nscA probably synthesizes and cyclizes the decaketide backbone. The hydrolase nscB then mediates the product release through hydrolysis followed by spontaneous decarboxylation. The prenyltransferase nscD catalyzes the addition of the dimethylallyl group to the aromatic C5. The FAD-dependent monooxygenase nscC is then responsible for the stereospecific hydroxylation at C2. Neosartoricin B can be converted into two additional compounds neosartoricins C and D. Neosartoricin C is a spirocyclic compound that is cyclized through the attack of C3 hydroxyl on C14, followed by dehydration. On the other hand, neosartoricin D is a further cyclized compound in which attack of C2 on C14 in neosartoricin C results in the formation of the acetal-containing dioxabicyclo-octanone ring. Both of these compounds are novel and possibly represent related metabolites of the gene cluster. The sequence is that of FAD-dependent monooxygenase nscC from Trichophyton equinum (strain ATCC MYA-4606 / CBS 127.97) (Horse ringworm fungus).